A 336-amino-acid chain; its full sequence is Octanoyltransferase (336 aa).

Residues 1–16 (MPKSALMSSSFQTSVS) show a composition bias toward polar residues. Disordered stretches follow at residues 1-22 (MPKS…PLPV) and 48-88 (QGKG…GGGR). A unknown region spans residues 1 to 92 (MPKSALMSSS…AAGGGRTIRD (92 aa)). A lipB domain region spans residues 93–336 (VKEAAFDVLD…GQEALSVASP (244 aa)). Positions 124-318 (VGGRPTLLLV…AFALTFADYD (195 aa)) constitute a BPL/LPL catalytic domain. Substrate is bound by residues 170–177 (RGGDVTYH), 244–246 (SIG), and 257–259 (GIG). Residue Cys-275 is the Acyl-thioester intermediate of the active site.

The protein in the C-terminal section; belongs to the LipB family.

It localises to the cytoplasm. The catalysed reaction is octanoyl-[ACP] + L-lysyl-[protein] = N(6)-octanoyl-L-lysyl-[protein] + holo-[ACP] + H(+). It functions in the pathway protein modification; protein lipoylation via endogenous pathway; protein N(6)-(lipoyl)lysine from octanoyl-[acyl-carrier-protein]: step 1/2. Functionally, catalyzes the transfer of endogenously produced octanoic acid from octanoyl-acyl-carrier-protein onto the lipoyl domains of lipoate-dependent enzymes. Lipoyl-ACP can also act as a substrate although octanoyl-ACP is likely to be the physiological substrate. This chain is Octanoyltransferase, found in Deinococcus radiodurans (strain ATCC 13939 / DSM 20539 / JCM 16871 / CCUG 27074 / LMG 4051 / NBRC 15346 / NCIMB 9279 / VKM B-1422 / R1).